The sequence spans 511 residues: Arabinose import ATP-binding protein AraG (511 aa).

ABC transporter domains are found at residues 5–240 (LEFR…MVGR) and 240–501 (RQID…LRPR). 37 to 44 (GENGAGKS) contacts ATP.

Belongs to the ABC transporter superfamily. Arabinose importer (TC 3.A.1.2.2) family. In terms of assembly, the complex is composed of two ATP-binding proteins (AraG), two transmembrane proteins (AraH) and a solute-binding protein (AraF).

It localises to the cell inner membrane. It carries out the reaction L-arabinose(out) + ATP + H2O = L-arabinose(in) + ADP + phosphate + H(+). Its function is as follows. Part of the ABC transporter complex AraFGH involved in arabinose import. Responsible for energy coupling to the transport system. This is Arabinose import ATP-binding protein AraG from Ralstonia nicotianae (strain ATCC BAA-1114 / GMI1000) (Ralstonia solanacearum).